Reading from the N-terminus, the 889-residue chain is Cytoplasmic aconitate hydratase (889 aa).

Residues Gln86 and 205 to 207 (DSH) each bind substrate. Residues Cys437, Cys503, and Cys506 each contribute to the [4Fe-4S] cluster site. Residues Arg536, Arg541, Arg699, and 779–780 (SR) each bind substrate.

It belongs to the aconitase/IPM isomerase family. In terms of assembly, interacts (when associated with the 4Fe-4S) with FBXL5. Interacts with frataxin(81-210). It depends on [4Fe-4S] cluster as a cofactor.

The protein resides in the cytoplasm. The protein localises to the cytosol. It catalyses the reaction citrate = D-threo-isocitrate. Bifunctional iron sensor that switches between 2 activities depending on iron availability. Iron deprivation, promotes its mRNA binding activity through which it regulates the expression of genes involved in iron uptake, sequestration and utilization. Binds to iron-responsive elements (IRES) in the untranslated region of target mRNAs preventing for instance the translation of ferritin and aminolevulinic acid synthase and stabilizing the transferrin receptor mRNA. Its function is as follows. Conversely, when cellular iron levels are high, binds a 4Fe-4S cluster which precludes RNA binding activity and promotes the aconitase activity, the isomerization of citrate to isocitrate via cis-aconitate. The protein is Cytoplasmic aconitate hydratase (Aco1) of Rattus norvegicus (Rat).